The following is a 227-amino-acid chain: Mediator of RNA polymerase II transcription subunit 18 (227 aa).

It belongs to the Mediator complex subunit 18 family. Component of the Mediator complex.

Its subcellular location is the nucleus. Functionally, component of the Mediator complex, a coactivator involved in the regulated transcription of nearly all RNA polymerase II-dependent genes. Mediator functions as a bridge to convey information from gene-specific regulatory proteins to the basal RNA polymerase II transcription machinery. Mediator is recruited to promoters by direct interactions with regulatory proteins and serves as a scaffold for the assembly of a functional preinitiation complex with RNA polymerase II and the general transcription factors. In Caenorhabditis briggsae, this protein is Mediator of RNA polymerase II transcription subunit 18 (mdt-18).